The primary structure comprises 190 residues: Elongation factor P (190 aa).

Lys34 is subject to N6-(3,6-diaminohexanoyl)-5-hydroxylysine.

Belongs to the elongation factor P family. May be beta-lysylated on the epsilon-amino group of Lys-34 by the combined action of EpmA and EpmB, and then hydroxylated on the C5 position of the same residue by EpmC (if this protein is present). Lysylation is critical for the stimulatory effect of EF-P on peptide-bond formation. The lysylation moiety may extend toward the peptidyltransferase center and stabilize the terminal 3-CCA end of the tRNA. Hydroxylation of the C5 position on Lys-34 may allow additional potential stabilizing hydrogen-bond interactions with the P-tRNA.

Its subcellular location is the cytoplasm. Its pathway is protein biosynthesis; polypeptide chain elongation. Involved in peptide bond synthesis. Alleviates ribosome stalling that occurs when 3 or more consecutive Pro residues or the sequence PPG is present in a protein, possibly by augmenting the peptidyl transferase activity of the ribosome. Modification of Lys-34 is required for alleviation. In Hahella chejuensis (strain KCTC 2396), this protein is Elongation factor P.